A 394-amino-acid polypeptide reads, in one-letter code: Phosphoglycerate kinase (394 aa).

Substrate contacts are provided by residues 21–23 (DLN), Arg-36, 60–63 (HLGN), Arg-114, and Arg-147. Residues Lys-198, Glu-315, and 341-344 (GGET) contribute to the ATP site.

This sequence belongs to the phosphoglycerate kinase family. Monomer.

The protein resides in the cytoplasm. The enzyme catalyses (2R)-3-phosphoglycerate + ATP = (2R)-3-phospho-glyceroyl phosphate + ADP. Its pathway is carbohydrate degradation; glycolysis; pyruvate from D-glyceraldehyde 3-phosphate: step 2/5. The polypeptide is Phosphoglycerate kinase (Wigglesworthia glossinidia brevipalpis).